The chain runs to 294 residues: MTDLVPFSGRTLSEAASELGEGPTFDPGTGTAWWFNITGRELHELHLESGRKAIHPLPFLGSVLAVIDPLRQLIASDQGLFVRDTESSKLGHFATLEEKPGNRSNDGRIHPCGALWIGTMGRSAEKHAGAIYHVAGSRVTKLYSNITIPNAICFSPDGATAYFTDTDVNQLMRVDIDPATALPTGDPVLLSDESTSPGGVDGAVCDADGLIWNARWGASAVEVYKPDGQKVARYAVPATQPSCPAFVGAKAERLLVTSAWQGMDDAARAADPHAGKTFELGIEVKGRFEPAFRL.

Positions 21, 150, and 201 each coordinate a divalent metal cation. Catalysis depends on Asp-201, which acts as the Proton donor/acceptor.

This sequence belongs to the SMP-30/CGR1 family. Requires a divalent metal cation as cofactor.

Its function is as follows. Involved in the degradation of galactose via the DeLey-Doudoroff pathway. This Rhizobium meliloti (strain 1021) (Ensifer meliloti) protein is Putative sugar lactone lactonase.